Consider the following 159-residue polypeptide: 3-dehydroquinate dehydratase (159 aa).

Catalysis depends on Tyr-22, which acts as the Proton acceptor. Residues Asn-73, His-79, and Asp-86 each coordinate substrate. Residue His-99 is the Proton donor of the active site. Substrate contacts are provided by residues 100 to 101 and Arg-110; that span reads IS.

This sequence belongs to the type-II 3-dehydroquinase family. In terms of assembly, homododecamer.

The enzyme catalyses 3-dehydroquinate = 3-dehydroshikimate + H2O. It functions in the pathway metabolic intermediate biosynthesis; chorismate biosynthesis; chorismate from D-erythrose 4-phosphate and phosphoenolpyruvate: step 3/7. In terms of biological role, catalyzes a trans-dehydration via an enolate intermediate. The protein is 3-dehydroquinate dehydratase of Campylobacter jejuni subsp. jejuni serotype O:6 (strain 81116 / NCTC 11828).